Consider the following 470-residue polypeptide: Uronate isomerase (470 aa).

Belongs to the metallo-dependent hydrolases superfamily. Uronate isomerase family.

It carries out the reaction D-glucuronate = D-fructuronate. The enzyme catalyses aldehydo-D-galacturonate = keto-D-tagaturonate. Its pathway is carbohydrate metabolism; pentose and glucuronate interconversion. This Escherichia coli O157:H7 (strain EC4115 / EHEC) protein is Uronate isomerase.